The primary structure comprises 105 residues: Secreted RxLR effector protein 158 (105 aa).

Residues 1–22 form the signal peptide; the sequence is MRGAHYVAIVLLVAAGGQTAAG. A RxLR-dEER motif is present at residues 50–71; the sequence is RALQASRNPKDDLMFSAGDEER.

Belongs to the RxLR effector family.

The protein resides in the secreted. The protein localises to the host nucleus. Its subcellular location is the host cytoplasm. Its function is as follows. Secreted effector that partially suppresses the host cell death induced by cell death-inducing proteins. The polypeptide is Secreted RxLR effector protein 158 (Plasmopara viticola (Downy mildew of grapevine)).